The sequence spans 245 residues: UPF0246 protein cgR_1824 (245 aa).

It belongs to the UPF0246 family.

The protein is UPF0246 protein cgR_1824 of Corynebacterium glutamicum (strain R).